The sequence spans 1140 residues: MSYNYVVTAQKPTAVNGCVTGHFTSAEDLNLLIAKNTRLEIYVVTAEGLRPVKEVGMYGKIAVMELFRPKGESKDLLFILTAKYNACILEYKQSGESIDIITRAHGNVQDRIGRPSETGIIGIIDPECRMIGLRLYDGLFKVIPLDRDNKELKAFNIRLEELHVIDVKFLYGCQAPTICFVYQDPQGRHVKTYEVSLREKEFNKGPWKQENVEAEASMVIAVPEPFGGAIIIGQESITYHNGDKYLAIAPPIIKQSTIVCHNRVDPNGSRYLLGDMEGRLFMLLLEKEEQMDGTVTLKDLRVELLGETSIAECLTYLDNGVVFVGSRLGDSQLVKLNVDSNEQGSYVVAMETFTNLGPIVDMCVVDLERQGQGQLVTCSGAFKEGSLRIIRNGIGIHEHASIDLPGIKGLWPLRSDPNRETDDTLVLSFVGQTRVLMLNGEEVEETELMGFVDDQQTFFCGNVAHQQLIQITSASVRLVSQEPKALVSEWKEPQGKNISVASCNSSQVVVAVGRALYYLQIHPQELRQISHTEMEHEVACLDITPLGDSNGMSPLCAIGLWTDISARIAKLPSFELLHKEMLGGEIIPRSILMTTFESSHYLLCALGDGALFYFGLNIETGLLSDRKKVTLGTQPTVLRTFRSLSTTNVFACSDRPTVIYSSNHKLVFSNVNLKEVNYMCPLNSDGYPDSLALANNSTLTIGTIDEIQKLHIRTVPLYESPRKICYQEVSQCFGVLSSRIEVQDTSGGTTALRPSASTQALSSSVSSSKLFSSSTAPHETSFGEEVEVHNLLIIDQHTFEVLHAHQFLQNEYALSLVSCKLGKDPNTYFIVGTAMVYPEEAEPKQGRIVVFQYSDGKLQTVAEKEVKGAVYSMVEFNGKLLASINSTVRLYEWTTEKELRTECNHYNNIMALYLKTKGDFILVGDLMRSVLLLAYKPMEGNFEEIARDFNPNWMSAVEILDDDNFLGAENAFNLFVCQKDSAATTDEERQHLQEVGLFHLGEFVNVFCHGSLVMQNLGETSTPTQGSVLFGTVNGMIGLVTSLSESWYNLLLDMQNRLNKVIKSVGKIEHSFWRSFHTERKTEPATGFIDGDLIESFLDISRPKMQEVVANLQYDDGSGMKREATADDLIKVVEELTRIH.

Ser-2 bears the N-acetylserine mark. Residues 2–768 (SYNYVVTAQK…QALSSSVSSS (767 aa)) form an interaction with CDT1 region. The WD repeat beta-propeller A stretch occupies residues 13–356 (TAVNGCVTGH…VVAMETFTNL (344 aa)). Residues 391 to 708 (RNGIGIHEHA…LTIGTIDEIQ (318 aa)) are WD repeat beta-propeller B; Interaction with CUL4A. Residues 709–1043 (KLHIRTVPLY…NGMIGLVTSL (335 aa)) are WD repeat beta-propeller C. Residues 771–1140 (FSSSTAPHET…KVVEELTRIH (370 aa)) are interaction with CDT1 and CUL4A. At Lys-1067 the chain carries N6-acetyllysine. A Glycyl lysine isopeptide (Lys-Gly) (interchain with G-Cter in SUMO2) cross-link involves residue Lys-1121. Thr-1125 carries the phosphothreonine modification.

The protein belongs to the DDB1 family. In terms of assembly, component of the UV-DDB complex which includes DDB1 and DDB2; the heterodimer dimerizes to give rise to a heterotetramer when bound to damaged DNA. The UV-DDB complex interacts with monoubiquitinated histone H2A and binds to XPC via the DDB2 subunit. Component of numerous DCX (DDB1-CUL4-X-box) E3 ubiquitin-protein ligase complexes which consist of a core of DDB1, CUL4A or CUL4B and RBX1. DDB1 may recruit specific substrate targeting subunits to the DCX complex. These substrate targeting subunits are generally known as DCAF (DDB1- and CUL4-associated factor) or CDW (CUL4-DDB1-associated WD40-repeat) proteins. Interacts with AMBRA1, ATG16L1, BTRC, CRBN, DCAF1, DCAF4, DCAF5, DCAF6, DCAF7, DCAF8, DCAF9, DCAF10, DCAF11, DCAF12, DCAF15, DCAF16, DCAF17, DDA1, DET1, DTL, ERCC8, FBXW5, FBXW8, GRWD1, KATNB1, NLE1, NUP43, PAFAH1B1, PHIP, PWP1, RBBP4, RBBP5, RBBP7, COP1, SNRNP40, DCAF1, WDR5, WDR5B, WDR12, WDR26, WDR39, WDR42, WDR53, WDR59, WDR61, WSB1, WSB2, LRWD1 and WDTC1. DCX complexes may associate with the COP9 signalosome, and this inhibits the E3 ubiquitin-protein ligase activity of the complex. Interacts with NF2, TSC1 and TSC2. Interacts with AGO1 and AGO2. Associates with the E3 ligase complex containing DYRK2, EDD/UBR5, DDB1 and DCAF1 proteins (EDVP complex). Interacts directly with DYRK2. DCX(DTL) complex interacts with FBXO11; does not ubiquitinate and degradate FBXO11. Interacts with TRPC4AP. Interacts with CRY1 and CRY2. The DDB1-CUL4A complex interacts with CRY1. May also interact with DCUN1D1, DCUN1D2, DCUN1D3 and DCUN1D5. Component of the DCX(DCAF13) E3 ubiquitin ligase complex, at least composed of CUL4 (CUL4A or CUL4B), DDB1, DCAF13 and RBX1. Interacts with DCAF13 (via WD40 domain). In terms of processing, phosphorylated by ABL1. Ubiquitinated by CUL4A. Subsequently degraded by ubiquitin-dependent proteolysis. Post-translationally, acetylated, promoting interaction with CUL4 (CUL4A or CUL4B) and subsequent formation of DCX (DDB1-CUL4-X-box) E3 ubiquitin-protein ligase complexes. Deacetylation by SIRT7 impairs the interaction with CUL4 (CUL4A or CUL4B) and formation of DCX (DDB1-CUL4-X-box) E3 ubiquitin-protein ligase complexes.

It localises to the cytoplasm. It is found in the nucleus. It participates in protein modification; protein ubiquitination. Its function is as follows. Protein, which is both involved in DNA repair and protein ubiquitination, as part of the UV-DDB complex and DCX (DDB1-CUL4-X-box) complexes, respectively. Core component of the UV-DDB complex (UV-damaged DNA-binding protein complex), a complex that recognizes UV-induced DNA damage and recruit proteins of the nucleotide excision repair pathway (the NER pathway) to initiate DNA repair. The UV-DDB complex preferentially binds to cyclobutane pyrimidine dimers (CPD), 6-4 photoproducts (6-4 PP), apurinic sites and short mismatches. Also functions as a component of numerous distinct DCX (DDB1-CUL4-X-box) E3 ubiquitin-protein ligase complexes which mediate the ubiquitination and subsequent proteasomal degradation of target proteins. The functional specificity of the DCX E3 ubiquitin-protein ligase complex is determined by the variable substrate recognition component recruited by DDB1. DCX(DDB2) (also known as DDB1-CUL4-ROC1, CUL4-DDB-ROC1 and CUL4-DDB-RBX1) may ubiquitinate histone H2A, histone H3 and histone H4 at sites of UV-induced DNA damage. The ubiquitination of histones may facilitate their removal from the nucleosome and promote subsequent DNA repair. DCX(DDB2) also ubiquitinates XPC, which may enhance DNA-binding by XPC and promote NER. DCX(DTL) plays a role in PCNA-dependent polyubiquitination of CDT1 and MDM2-dependent ubiquitination of TP53 in response to radiation-induced DNA damage and during DNA replication. DCX(ERCC8) (the CSA complex) plays a role in transcription-coupled repair (TCR). The DDB1-CUL4A-DTL E3 ligase complex regulates the circadian clock function by mediating the ubiquitination and degradation of CRY1. DDB1-mediated CRY1 degradation promotes FOXO1 protein stability and FOXO1-mediated gluconeogenesis in the liver. By acting on TET dioxygenses, essential for oocyte maintenance at the primordial follicle stage, hence essential for female fertility. Maternal factor required for proper zygotic genome activation and genome reprogramming. The protein is DNA damage-binding protein 1 (DDB1) of Bos taurus (Bovine).